A 292-amino-acid polypeptide reads, in one-letter code: 2-(5''-triphosphoribosyl)-3'-dephosphocoenzyme-A synthase (292 aa).

This sequence belongs to the CitG/MdcB family.

The enzyme catalyses 3'-dephospho-CoA + ATP = 2'-(5''-triphospho-alpha-D-ribosyl)-3'-dephospho-CoA + adenine. Functionally, catalyzes the formation of 2-(5''-triphosphoribosyl)-3'-dephosphocoenzyme-A, the precursor of the prosthetic group of the holo-acyl carrier protein (gamma chain) of citrate lyase, from ATP and dephospho-CoA. This Escherichia coli O17:K52:H18 (strain UMN026 / ExPEC) protein is 2-(5''-triphosphoribosyl)-3'-dephosphocoenzyme-A synthase.